The sequence spans 880 residues: Alanine--tRNA ligase (880 aa).

Zn(2+)-binding residues include His-566, His-570, Cys-668, and His-672.

Belongs to the class-II aminoacyl-tRNA synthetase family. Zn(2+) is required as a cofactor.

The protein localises to the cytoplasm. It catalyses the reaction tRNA(Ala) + L-alanine + ATP = L-alanyl-tRNA(Ala) + AMP + diphosphate. Its function is as follows. Catalyzes the attachment of alanine to tRNA(Ala) in a two-step reaction: alanine is first activated by ATP to form Ala-AMP and then transferred to the acceptor end of tRNA(Ala). Also edits incorrectly charged Ser-tRNA(Ala) and Gly-tRNA(Ala) via its editing domain. The polypeptide is Alanine--tRNA ligase (Trichormus variabilis (strain ATCC 29413 / PCC 7937) (Anabaena variabilis)).